Consider the following 210-residue polypeptide: 3-hexulose-6-phosphate synthase (210 aa).

It belongs to the HPS/KGPDC family. HPS subfamily.

It catalyses the reaction D-ribulose 5-phosphate + formaldehyde = D-arabino-hex-3-ulose 6-phosphate. It participates in one-carbon metabolism; formaldehyde assimilation via RuMP pathway; D-fructose 6-phosphate from D-ribulose 5-phosphate and formaldehyde: step 1/2. Its function is as follows. Catalyzes the condensation of ribulose 5-phosphate with formaldehyde to form 3-hexulose 6-phosphate. The sequence is that of 3-hexulose-6-phosphate synthase from Staphylococcus aureus (strain bovine RF122 / ET3-1).